The chain runs to 237 residues: Sensory rhodopsin-2 (237 aa).

Topologically, residues 1 to 2 (MA) are extracellular. The helical transmembrane segment at 3–23 (LTTWFWVGAVGMLAGTVLPIR) threads the bilayer. At 24 to 31 (DCIRHPSH) the chain is on the cytoplasmic side. Residues 32 to 53 (RRYDLVLAGITGLAAIAYTTMG) traverse the membrane as a helical segment. Residues 54 to 67 (LGITATTVGDRTVY) lie on the Extracellular side of the membrane. Residues 68–89 (LARYIDWLVTTPLIVLYLAMLA) traverse the membrane as a helical segment. At 90-92 (RPG) the chain is on the cytoplasmic side. A helical transmembrane segment spans residues 93 to 115 (HRTSAWLLAADVFVIAAGIAAAL). The Extracellular segment spans residues 116 to 119 (TTGV). Residues 120 to 147 (QRWLFFAVGAAGYAALLYGLLGTLPRAL) form a helical membrane-spanning segment. Topologically, residues 148-150 (GDD) are cytoplasmic. A helical membrane pass occupies residues 151-178 (PRVRSLFVTLRNITVVLWTLYPVVWLLS). Residues 179-186 (PAGIGILQ) lie on the Extracellular side of the membrane. Residues 187 to 214 (TEMYTIVVVYLDFISKVAFVAFAVLGAD) form a helical membrane-spanning segment. N6-(retinylidene)lysine is present on Lys-202. Residues 215–237 (AVSRLVAADAAAPATAEPTPDGD) are Cytoplasmic-facing.

It belongs to the archaeal/bacterial/fungal opsin family. Interacts with HTR-II.

The protein resides in the cell membrane. Functionally, photophobic photoreceptor responsible for the negative phototaxis. Activates the sensory rhodopsin II transducer (HTR-II) in response to blue light. This Halobacterium salinarum (strain ATCC 700922 / JCM 11081 / NRC-1) (Halobacterium halobium) protein is Sensory rhodopsin-2 (sop2).